Here is a 103-residue protein sequence, read N- to C-terminus: SLC35A4 upstream open reading frame protein (103 aa).

The helical transmembrane segment at 62 to 84 (ASAVLGFAVGTCTGIYAAQAYAV) threads the bilayer.

The protein resides in the mitochondrion inner membrane. Required to maintain cellular respiration. This Homo sapiens (Human) protein is SLC35A4 upstream open reading frame protein.